The primary structure comprises 400 residues: DNA polymerase IV (400 aa).

In terms of domain architecture, UmuC spans 8-191; it reads ILLCDANSFF…LPVRELFGIG (184 aa). Mg(2+) is bound by residues D12 and D109. E110 is an active-site residue.

Belongs to the DNA polymerase type-Y family. Monomer. Mg(2+) is required as a cofactor.

The protein localises to the cytoplasm. It catalyses the reaction DNA(n) + a 2'-deoxyribonucleoside 5'-triphosphate = DNA(n+1) + diphosphate. Functionally, poorly processive, error-prone DNA polymerase involved in untargeted mutagenesis. Copies undamaged DNA at stalled replication forks, which arise in vivo from mismatched or misaligned primer ends. These misaligned primers can be extended by PolIV. Exhibits no 3'-5' exonuclease (proofreading) activity. May be involved in translesional synthesis, in conjunction with the beta clamp from PolIII. The chain is DNA polymerase IV from Moorella thermoacetica (strain ATCC 39073 / JCM 9320).